A 408-amino-acid chain; its full sequence is Histidine--tRNA ligase (408 aa).

It belongs to the class-II aminoacyl-tRNA synthetase family. In terms of assembly, homodimer.

It is found in the cytoplasm. The catalysed reaction is tRNA(His) + L-histidine + ATP = L-histidyl-tRNA(His) + AMP + diphosphate + H(+). The sequence is that of Histidine--tRNA ligase from Campylobacter jejuni subsp. jejuni serotype O:23/36 (strain 81-176).